We begin with the raw amino-acid sequence, 476 residues long: mRNA-capping enzyme subunit beta (476 aa).

Residues 1-133 (MNVGSILNDE…KLKSTNKPRR (133 aa)) are disordered. 2 stretches are compositionally biased toward basic and acidic residues: residues 51–67 (LKTK…EHSN) and 105–114 (HPIEQDKSEK). Residues 123–132 (SKLKSTNKPR) show a composition bias toward basic residues.

This sequence belongs to the fungal TPase family. Heterodimer. The mRNA-capping enzyme is composed of two separate chains alpha and beta, respectively a mRNA guanylyltransferase and an mRNA 5'-triphosphate monophosphatase. Requires Mg(2+) as cofactor.

The protein resides in the nucleus. The enzyme catalyses a 5'-end triphospho-ribonucleoside in mRNA + H2O = a 5'-end diphospho-ribonucleoside in mRNA + phosphate + H(+). In terms of biological role, first step of mRNA capping. Converts the 5'-triphosphate end of a nascent mRNA chain into a diphosphate end. This chain is mRNA-capping enzyme subunit beta (CET1), found in Debaryomyces hansenii (strain ATCC 36239 / CBS 767 / BCRC 21394 / JCM 1990 / NBRC 0083 / IGC 2968) (Yeast).